The primary structure comprises 335 residues: Protein-glutamate methylesterase/protein-glutamine glutaminase 3 (335 aa).

Residues 2-119 form the Response regulatory domain; it reads RIGIVNDMPL…GNPQTAAAPL (118 aa). D53 carries the post-translational modification 4-aspartylphosphate. Positions 144–335 constitute a CheB-type methylesterase domain; sequence PKAGGARQRL…IAPRLAEVFD (192 aa). Active-site residues include S159, H186, and D279.

It belongs to the CheB family. Post-translationally, phosphorylated by CheA. Phosphorylation of the N-terminal regulatory domain activates the methylesterase activity.

The protein resides in the cytoplasm. The catalysed reaction is [protein]-L-glutamate 5-O-methyl ester + H2O = L-glutamyl-[protein] + methanol + H(+). The enzyme catalyses L-glutaminyl-[protein] + H2O = L-glutamyl-[protein] + NH4(+). Functionally, involved in chemotaxis. Part of a chemotaxis signal transduction system that modulates chemotaxis in response to various stimuli. Catalyzes the demethylation of specific methylglutamate residues introduced into the chemoreceptors (methyl-accepting chemotaxis proteins or MCP) by CheR. Also mediates the irreversible deamidation of specific glutamine residues to glutamic acid. The protein is Protein-glutamate methylesterase/protein-glutamine glutaminase 3 of Pseudomonas aeruginosa (strain ATCC 15692 / DSM 22644 / CIP 104116 / JCM 14847 / LMG 12228 / 1C / PRS 101 / PAO1).